The primary structure comprises 480 residues: Aspartyl/glutamyl-tRNA(Asn/Gln) amidotransferase subunit B (480 aa).

This sequence belongs to the GatB/GatE family. GatB subfamily. Heterotrimer of A, B and C subunits.

The enzyme catalyses L-glutamyl-tRNA(Gln) + L-glutamine + ATP + H2O = L-glutaminyl-tRNA(Gln) + L-glutamate + ADP + phosphate + H(+). It carries out the reaction L-aspartyl-tRNA(Asn) + L-glutamine + ATP + H2O = L-asparaginyl-tRNA(Asn) + L-glutamate + ADP + phosphate + 2 H(+). Allows the formation of correctly charged Asn-tRNA(Asn) or Gln-tRNA(Gln) through the transamidation of misacylated Asp-tRNA(Asn) or Glu-tRNA(Gln) in organisms which lack either or both of asparaginyl-tRNA or glutaminyl-tRNA synthetases. The reaction takes place in the presence of glutamine and ATP through an activated phospho-Asp-tRNA(Asn) or phospho-Glu-tRNA(Gln). The protein is Aspartyl/glutamyl-tRNA(Asn/Gln) amidotransferase subunit B of Caldicellulosiruptor bescii (strain ATCC BAA-1888 / DSM 6725 / KCTC 15123 / Z-1320) (Anaerocellum thermophilum).